We begin with the raw amino-acid sequence, 374 residues long: Eukaryotic translation initiation factor 3 subunit M (374 aa).

The residue at position 2 (serine 2) is an N-acetylserine. Phosphoserine occurs at positions 2 and 152. In terms of domain architecture, PCI spans 180–339 (AASKVMVELL…RKVVVSHSTH (160 aa)). N6-acetyllysine is present on lysine 254. Positions 344 to 374 (KQQWQQLYDTLNAWKQNLNKVKNSLLSLSDT) are interaction with HSV-1 and HSV-2. Serine 367 is subject to Phosphoserine.

Component of the eukaryotic translation initiation factor 3 (eIF-3) complex, which is composed of 13 subunits: EIF3A, EIF3B, EIF3C, EIF3D, EIF3E, EIF3F, EIF3G, EIF3H, EIF3I, EIF3J, EIF3K, EIF3L and EIF3M. The eIF-3 complex appears to include 3 stable modules: module A is composed of EIF3A, EIF3B, EIF3G and EIF3I; module B is composed of EIF3F, EIF3H, and EIF3M; and module C is composed of EIF3C, EIF3D, EIF3E, EIF3K and EIF3L. EIF3C of module C binds EIF3B of module A and EIF3H of module B, thereby linking the three modules. EIF3J is a labile subunit that binds to the eIF-3 complex via EIF3B. The eIF-3 complex interacts with RPS6KB1 under conditions of nutrient depletion. Mitogenic stimulation leads to binding and activation of a complex composed of MTOR and RPTOR, leading to phosphorylation and release of RPS6KB1 and binding of EIF4B to eIF-3. As to expression, broadly expressed.

It localises to the cytoplasm. Its function is as follows. Component of the eukaryotic translation initiation factor 3 (eIF-3) complex, which is required for several steps in the initiation of protein synthesis. The eIF-3 complex associates with the 40S ribosome and facilitates the recruitment of eIF-1, eIF-1A, eIF-2:GTP:methionyl-tRNAi and eIF-5 to form the 43S pre-initiation complex (43S PIC). The eIF-3 complex stimulates mRNA recruitment to the 43S PIC and scanning of the mRNA for AUG recognition. The eIF-3 complex is also required for disassembly and recycling of post-termination ribosomal complexes and subsequently prevents premature joining of the 40S and 60S ribosomal subunits prior to initiation. The eIF-3 complex specifically targets and initiates translation of a subset of mRNAs involved in cell proliferation, including cell cycling, differentiation and apoptosis, and uses different modes of RNA stem-loop binding to exert either translational activation or repression. In terms of biological role, (Microbial infection) May favor virus entry in case of infection with herpes simplex virus 1 (HSV1) or herpes simplex virus 2 (HSV2). In Homo sapiens (Human), this protein is Eukaryotic translation initiation factor 3 subunit M.